The primary structure comprises 410 residues: MFTSQDARDSRPDRELRMMNDVLMTYPYTVIHLPAQNMLSTAKGMVNIAENYRDYPILAIFYVKYLMKKLPYGVIPVNLEWPEPYVVLNTILKRLKEHKFFANKDKEDFAERLHKLIAPDVSIPESRKDEILGQQKKERVVTKTINENFLDPVNARPRLQRFFEKLHNGTLVENLEVGLCKVEILVSSKAMLGQSFKLQIMAANVRELWVGEMVCNMITNETDYGFDEGGGDDDEGSSVEVQNSQSASPGQDQEAQRAPEAPETSSQLFDKIVSALQDDPDSAKAQLGQCRKLASYLLSHKREQEDFFMQTKDTRARLYLDLKGCLGSSWKFSIYRGVRCKQNGQLKVSLKPSNSGHLSGFWVNIKMTSQGNTLDDIRLQVRCDILGKDTNRRGGSEKDPEDQSETESSG.

Positions 225–237 (GFDEGGGDDDEGS) are enriched in acidic residues. Disordered regions lie at residues 225 to 264 (GFDE…APET) and 388 to 410 (KDTN…ESSG). The span at 239-253 (VEVQNSQSASPGQDQ) shows a compositional bias: polar residues. Over residues 388–398 (KDTNRRGGSEK) the composition is skewed to basic and acidic residues. A compositionally biased stretch (acidic residues) spans 399–410 (DPEDQSETESSG).

Plasmid partition require REP1, REP2, and a cis-acting DNA sequence (known as STB). REP1 may act by intercalating in the yeast nuclear matrix and binding STB either directly or via REP2. In Zygosaccharomyces rouxii, this protein is Trans-acting factor B (P).